The sequence spans 463 residues: uncharacterized protein (463 aa).

Belongs to the mycobacterial PPE family.

This is an uncharacterized protein from Mycobacterium tuberculosis (strain CDC 1551 / Oshkosh).